Consider the following 132-residue polypeptide: Agouti-signaling protein (132 aa).

The first 22 residues, 1–22 (MDVTRLLLATLLVFLCFFTAYS), serve as a signal peptide directing secretion. N-linked (GlcNAc...) asparagine glycosylation is present at N39. Residues 57–88 (KKSKQTSRKEAEKKRSSKKEASMKKVARPRTP) are disordered. Over residues 63-79 (SRKEAEKKRSSKKEASM) the composition is skewed to basic and acidic residues. 5 cysteine pairs are disulfide-bonded: C93-C108, C100-C114, C107-C125, C111-C132, and C116-C123. In terms of domain architecture, Agouti spans 93–132 (CVATRDSCKPPAPACCDPCASCQCRFFRSACSCRVLSLNC).

It is found in the secreted. Functionally, involved in the regulation of melanogenesis. The binding of ASP to MC1R precludes alpha-MSH initiated signaling and thus blocks production of cAMP, leading to a down-regulation of eumelanogenesis (brown/black pigment) and thus increasing synthesis of pheomelanin (yellow/red pigment). The sequence is that of Agouti-signaling protein (ASIP) from Macaca assamensis (Assam macaque).